The sequence spans 151 residues: Transcription elongation factor GreA (151 aa).

Residues Ala-41–Ala-62 are a coiled coil.

The protein belongs to the GreA/GreB family.

In terms of biological role, necessary for efficient RNA polymerase transcription elongation past template-encoded arresting sites. The arresting sites in DNA have the property of trapping a certain fraction of elongating RNA polymerases that pass through, resulting in locked ternary complexes. Cleavage of the nascent transcript by cleavage factors such as GreA or GreB allows the resumption of elongation from the new 3'terminus. GreA releases sequences of 2 to 3 nucleotides. This Cereibacter sphaeroides (strain ATCC 17023 / DSM 158 / JCM 6121 / CCUG 31486 / LMG 2827 / NBRC 12203 / NCIMB 8253 / ATH 2.4.1.) (Rhodobacter sphaeroides) protein is Transcription elongation factor GreA.